We begin with the raw amino-acid sequence, 77 residues long: Acyl carrier protein (77 aa).

The region spanning 2–77 (AEVFDRVKEI…DAVDYINSKA (76 aa)) is the Carrier domain. Ser-37 carries the O-(pantetheine 4'-phosphoryl)serine modification.

The protein belongs to the acyl carrier protein (ACP) family. 4'-phosphopantetheine is transferred from CoA to a specific serine of apo-ACP by AcpS. This modification is essential for activity because fatty acids are bound in thioester linkage to the sulfhydryl of the prosthetic group.

The protein localises to the cytoplasm. It functions in the pathway lipid metabolism; fatty acid biosynthesis. Functionally, carrier of the growing fatty acid chain in fatty acid biosynthesis. This is Acyl carrier protein from Oceanobacillus iheyensis (strain DSM 14371 / CIP 107618 / JCM 11309 / KCTC 3954 / HTE831).